A 209-amino-acid polypeptide reads, in one-letter code: Uracil phosphoribosyltransferase (209 aa).

Residues R79, R104, and 131–139 (DPMLATGGS) contribute to the 5-phospho-alpha-D-ribose 1-diphosphate site. Uracil is bound by residues I194 and 199–201 (GDA). A 5-phospho-alpha-D-ribose 1-diphosphate-binding site is contributed by D200.

This sequence belongs to the UPRTase family. Requires Mg(2+) as cofactor.

It catalyses the reaction UMP + diphosphate = 5-phospho-alpha-D-ribose 1-diphosphate + uracil. The protein operates within pyrimidine metabolism; UMP biosynthesis via salvage pathway; UMP from uracil: step 1/1. Its activity is regulated as follows. Allosterically activated by GTP. Functionally, catalyzes the conversion of uracil and 5-phospho-alpha-D-ribose 1-diphosphate (PRPP) to UMP and diphosphate. In Shouchella clausii (strain KSM-K16) (Alkalihalobacillus clausii), this protein is Uracil phosphoribosyltransferase.